The following is a 361-amino-acid chain: 3-dehydroquinate synthase (361 aa).

NAD(+)-binding positions include 104–108, 128–129, Lys-141, Lys-150, and 168–171; these read GVIGD, TT, and FLRT. Residues Glu-183, His-246, and His-263 each coordinate Zn(2+).

This sequence belongs to the sugar phosphate cyclases superfamily. Dehydroquinate synthase family. The cofactor is Co(2+). Zn(2+) serves as cofactor. NAD(+) is required as a cofactor.

The protein resides in the cytoplasm. The enzyme catalyses 7-phospho-2-dehydro-3-deoxy-D-arabino-heptonate = 3-dehydroquinate + phosphate. It participates in metabolic intermediate biosynthesis; chorismate biosynthesis; chorismate from D-erythrose 4-phosphate and phosphoenolpyruvate: step 2/7. In terms of biological role, catalyzes the conversion of 3-deoxy-D-arabino-heptulosonate 7-phosphate (DAHP) to dehydroquinate (DHQ). The protein is 3-dehydroquinate synthase of Opitutus terrae (strain DSM 11246 / JCM 15787 / PB90-1).